The chain runs to 582 residues: TRAF-type zinc finger domain-containing protein 1 (582 aa).

The residue at position 2 (A2) is an N-acetylalanine. The segment at 27 to 103 (IHEIHCQRNI…DLELSILKLK (77 aa)) adopts a TRAF-type zinc-finger fold. Residue S191 is modified to Phosphoserine. The segment at 216–238 (EEQERQERNRGQQPPKEGGEDGA) is disordered. A phosphoserine mark is found at S278, S320, S326, S327, S409, S415, S430, and S470. Disordered stretches follow at residues 402 to 509 (EGIP…IAPG) and 522 to 582 (PENI…EEEE). 2 stretches are compositionally biased toward polar residues: residues 454-471 (PFNN…STSG) and 486-504 (LNNS…SQNG).

As to quaternary structure, interacts with MAVS, TICAM1, TRAF1, TRAF2, TRAF3 and TRAF6.

Its function is as follows. Negative feedback regulator that controls excessive innate immune responses. Regulates both Toll-like receptor 4 (TLR4) and DDX58/RIG1-like helicases (RLH) pathways. May inhibit the LTR pathway by direct interaction with TRAF6 and attenuation of NF-kappa-B activation. May negatively regulate the RLH pathway downstream from MAVS and upstream of NF-kappa-B and IRF3. The protein is TRAF-type zinc finger domain-containing protein 1 (TRAFD1) of Macaca fascicularis (Crab-eating macaque).